Consider the following 279-residue polypeptide: Pantothenate synthetase (279 aa).

30-37 (MGALHAGH) is a binding site for ATP. Catalysis depends on His-37, which acts as the Proton donor. Residue Gln-61 participates in (R)-pantoate binding. A beta-alanine-binding site is contributed by Gln-61. 147 to 150 (GEKD) serves as a coordination point for ATP. Gln-153 lines the (R)-pantoate pocket. Residues Ala-176 and 184–187 (LSSR) contribute to the ATP site.

This sequence belongs to the pantothenate synthetase family. Homodimer.

The protein localises to the cytoplasm. It catalyses the reaction (R)-pantoate + beta-alanine + ATP = (R)-pantothenate + AMP + diphosphate + H(+). It functions in the pathway cofactor biosynthesis; (R)-pantothenate biosynthesis; (R)-pantothenate from (R)-pantoate and beta-alanine: step 1/1. In terms of biological role, catalyzes the condensation of pantoate with beta-alanine in an ATP-dependent reaction via a pantoyl-adenylate intermediate. In Sphingopyxis alaskensis (strain DSM 13593 / LMG 18877 / RB2256) (Sphingomonas alaskensis), this protein is Pantothenate synthetase.